Reading from the N-terminus, the 375-residue chain is DNA replication and repair protein RecF (375 aa).

30 to 37 (GENAQGKT) is a binding site for ATP.

It belongs to the RecF family.

The protein localises to the cytoplasm. Its function is as follows. The RecF protein is involved in DNA metabolism; it is required for DNA replication and normal SOS inducibility. RecF binds preferentially to single-stranded, linear DNA. It also seems to bind ATP. The protein is DNA replication and repair protein RecF of Bacillus mycoides (strain KBAB4) (Bacillus weihenstephanensis).